The primary structure comprises 544 residues: Chaperonin GroEL 2 (544 aa).

ATP contacts are provided by residues 29-32, 86-90, Gly-413, 479-481, and Asp-495; these read TLGP, DGTTT, and NAA.

This sequence belongs to the chaperonin (HSP60) family. Forms a cylinder of 14 subunits composed of two heptameric rings stacked back-to-back. Interacts with the co-chaperonin GroES.

The protein localises to the cytoplasm. It catalyses the reaction ATP + H2O + a folded polypeptide = ADP + phosphate + an unfolded polypeptide.. Functionally, together with its co-chaperonin GroES, plays an essential role in assisting protein folding. The GroEL-GroES system forms a nano-cage that allows encapsulation of the non-native substrate proteins and provides a physical environment optimized to promote and accelerate protein folding. This is Chaperonin GroEL 2 from Synechococcus sp. (strain CC9605).